We begin with the raw amino-acid sequence, 118 residues long: Hisactophilin-1 (118 aa).

Gly-2 carries N-myristoyl glycine lipidation. Positions 8–109 (SHHGHFLSAE…HVSTKEHHDH (102 aa)) are contains several HHXH repeats. 2 tandem repeats follow at residues 34 to 46 (FHVE…VALK) and 74 to 86 (FHLE…VSIK). The interval 34 to 86 (FHVENHGGKVALKTHCGKYLSIGDHKQVYLSHHLHGDHSLFHLEHHGGKVSIK) is 2 X 13 AA approximate repeats.

It belongs to the hisactophilin family. As to quaternary structure, homodimer or heterodimer of hatA and hatB, linked by a disulfide bond. Post-translationally, phosphorylated.

Its subcellular location is the cytoplasm. It localises to the cell membrane. Functionally, may act as an intracellular pH sensor that links chemotactic signals to responses in the microfilament system of the cells by nucleating actin polymerization or stabilizing the filaments. In Dictyostelium discoideum (Social amoeba), this protein is Hisactophilin-1 (hatA).